Reading from the N-terminus, the 160-residue chain is MIP18 family protein F45G2.10 (160 aa).

Residues methionine 1 to valine 32 are disordered.

It belongs to the MIP18 family.

In terms of biological role, may play a role in chromosome segregation through establishment of sister chromatid cohesion. The chain is MIP18 family protein F45G2.10 from Caenorhabditis elegans.